We begin with the raw amino-acid sequence, 211 residues long: Uracil phosphoribosyltransferase (211 aa).

5-phospho-alpha-D-ribose 1-diphosphate-binding positions include arginine 81, arginine 106, and 133 to 141; that span reads DPMLATGNS. Residues isoleucine 196 and 201–203 contribute to the uracil site; that span reads GDA. Aspartate 202 provides a ligand contact to 5-phospho-alpha-D-ribose 1-diphosphate.

Belongs to the UPRTase family. Mg(2+) is required as a cofactor.

It carries out the reaction UMP + diphosphate = 5-phospho-alpha-D-ribose 1-diphosphate + uracil. The protein operates within pyrimidine metabolism; UMP biosynthesis via salvage pathway; UMP from uracil: step 1/1. Its activity is regulated as follows. Allosterically activated by GTP. Functionally, catalyzes the conversion of uracil and 5-phospho-alpha-D-ribose 1-diphosphate (PRPP) to UMP and diphosphate. The protein is Uracil phosphoribosyltransferase of Myxococcus xanthus (strain DK1622).